The sequence spans 408 residues: Translation initiation factor 2 subunit gamma (408 aa).

Positions 4-201 (QSEINIGLVG…TIEERIKTPK (198 aa)) constitute a tr-type G domain. A G1 region spans residues 13–20 (GHVDHGKT). Residues Asp16, Thr20, Gly41, and Ser43 each contribute to the Mg(2+) site. Position 16 to 21 (16 to 21 (DHGKTT)) interacts with GTP. Residues 41 to 45 (GISIR) are G2. Zn(2+) is bound by residues Cys56, Cys59, Cys71, and Cys74. The G3 stretch occupies residues 88–91 (DAPG). GTP contacts are provided by residues 144 to 147 (NKID) and 179 to 181 (SAQ). Residues 144-147 (NKID) form a G4 region. A G5 region spans residues 179–181 (SAQ).

Belongs to the TRAFAC class translation factor GTPase superfamily. Classic translation factor GTPase family. EIF2G subfamily. In terms of assembly, heterotrimer composed of an alpha, a beta and a gamma chain. The cofactor is Mg(2+).

It catalyses the reaction GTP + H2O = GDP + phosphate + H(+). In terms of biological role, eIF-2 functions in the early steps of protein synthesis by forming a ternary complex with GTP and initiator tRNA. The protein is Translation initiation factor 2 subunit gamma of Methanothermobacter thermautotrophicus (strain ATCC 29096 / DSM 1053 / JCM 10044 / NBRC 100330 / Delta H) (Methanobacterium thermoautotrophicum).